Here is a 297-residue protein sequence, read N- to C-terminus: MHRLLAWDAACLPPPPAAFRPMEVANFYYEPDCLAYGAKAARAAPRAPAAEPAIGEHERAIDFSPYLEPLAPAAADFAAPAPAHHDFLSDLFADDYGAKPSKKPSDYGYVSLGRAGAKAAPPACFPPPPPAALKAEPGFEPADCKRADDAPAMAAGFPFALRAYLGYQATPSGSSGSLSTSSSSSPPGTPSPADAKAAPAACFAGPPAAPAKAKAKKAVDKLSDEYKMRRERNNIAVRKSRDKAKMRNLETQHKVLELTAENERLQKKVEQLSRELSTLRNLFKQLPEPLLASAGHC.

The required for Lys-134 sumoylation stretch occupies residues 1–22 (MHRLLAWDAACLPPPPAAFRPM). Residue Arg-3 is modified to Asymmetric dimethylarginine; by CARM1. A required for MYC transcriptional repression region spans residues 22–105 (MEVANFYYEP…YGAKPSKKPS (84 aa)). The residue at position 39 (Lys-39) is an N6-acetyllysine; alternate. Lys-39 carries the N6-methylated lysine; alternate modification. 2 positions are modified to N6-acetyllysine; by KAT2A and KAT2B: Lys-99 and Lys-102. At Lys-103 the chain carries N6-acetyllysine; by KAT2A and KAT2B; alternate. Lys-103 is covalently cross-linked (Glycyl lysine isopeptide (Lys-Gly) (interchain with G-Cter in SUMO2); alternate). Phosphoserine; by RPS6KA1 and PKC/PRKCA is present on Ser-105. Lys-134 is covalently cross-linked (Glycyl lysine isopeptide (Lys-Gly) (interchain with G-Cter in SUMO2); alternate). Lys-134 is covalently cross-linked (Glycyl lysine isopeptide (Lys-Gly) (interchain with G-Cter in SUMO); alternate). Lys-145 is covalently cross-linked (Glycyl lysine isopeptide (Lys-Gly) (interchain with G-Cter in SUMO2)). Residues 172–201 (SGSSGSLSTSSSSSPPGTPSPADAKAAPAA) form a disordered region. At Thr-180 the chain carries Phosphothreonine; by GSK3-beta. Ser-181 and Ser-182 each carry an O-linked (GlcNAc) serine glycan. Ser-185 is subject to Phosphoserine; by GSK3-beta. Thr-189 is subject to Phosphothreonine; by RPS6KA1, CDK2 and MAPK. Residues Lys-212 and Lys-214 each participate in a glycyl lysine isopeptide (Lys-Gly) (interchain with G-Cter in SUMO2) cross-link. One can recognise a bZIP domain in the interval 223–286 (SDEYKMRRER…STLRNLFKQL (64 aa)). The segment at 227-247 (KMRRERNNIAVRKSRDKAKMR) is basic motif. Phosphoserine; by PKC/PRKCA is present on Ser-240. The segment at 249–256 (LETQHKVL) is leucine-zipper. Ser-277 bears the Phosphoserine; by CaMK2 mark. Lys-284 is covalently cross-linked (Glycyl lysine isopeptide (Lys-Gly) (interchain with G-Cter in SUMO2)).

It belongs to the bZIP family. C/EBP subfamily. In terms of assembly, binds DNA as a homodimer and as a heterodimer. Interacts with MYB; within the complex, MYB and CEBPB bind to different promoter regions. Interacts with ATF4. Binds DNA as a heterodimer with ATF4. Can form stable heterodimers with CEBPA, CEBPD, CEBPE and CEBPG. Interacts with SIX1. Isoform 2 and isoform 3 also form heterodimers. Interacts with TRIM28 and PTGES2. Interacts with PRDM16. Interacts with CCDC85B. Forms a complex with THOC5. Interacts with ZNF638; this interaction increases transcriptional activation. Interacts with CIDEA and CIDEC; these interactions increase transcriptional activation of a subset of CEBPB downstream target genes. Interacts with DDIT3/CHOP. Interacts with EP300; recruits EP300 to chromatin. Interacts with RORA; the interaction disrupts interaction with EP300. Interacts (not methylated) with MED23, MED26, SMARCA2, SMARCB1 and SMARCC1. Interacts with KAT2A and KAT2B. Interacts with ATF5; EP300 is required for ATF5 and CEBPB interaction and DNA binding. Interacts with NFE2L1; the heterodimer represses expression of DSPP during odontoblast differentiation. Phosphorylated at Thr-189 by MAPK and CDK2, serves to prime phosphorylation at Thr-180 and Ser-185 by GSK3B and acquire DNA-binding as well as transactivation activities, required to induce adipogenesis. MAPK and CDK2 act sequentially to maintain Thr-189 in the primed phosphorylated state during mitotical cloning expansion and thereby progression of terminal differentiation. Phosphorylation at Ser-105 enhances transactivation activity. Phosphorylation at Ser-277 in response to calcium increases transactivation activity. Phosphorylated at Thr-189 by RPS6KA1. Post-translationally, methylated. Methylation at Arg-3 by CARM1 and at Lys-39 by EHMT2 inhibit transactivation activity. Methylation is probably inhibited by phosphorylation at Thr-189. In terms of processing, sumoylated by polymeric chains of SUMO2 or SUMO3. Sumoylation at Lys-134 is required for inhibition of T-cells proliferation. In adipocytes, sumoylation at Lys-134 by PIAS1 leads to ubiquitination and subsequent proteasomal degradation. Desumoylated by SENP2, which abolishes ubiquitination and stabilizes protein levels. Ubiquitinated, leading to proteasomal degradation. Post-translationally, O-glycosylated, glycosylation at Ser-181 and Ser-182 prevents phosphorylation on Thr-189, Ser-185 and Thr-180 and DNA binding activity which delays the adipocyte differentiation program. In terms of processing, acetylated. Acetylation at Lys-39 is an important and dynamic regulatory event that contributes to its ability to transactivate target genes, including those associated with adipogenesis and adipocyte function. Deacetylation by HDAC1 represses its transactivation activity. Acetylated by KAT2A and KAT2B within a cluster of lysine residues between amino acids 99-103, this acetylation is strongly induced by glucocorticoid treatment and enhances transactivation activity. Liver and lung.

It is found in the nucleus. It localises to the cytoplasm. Its function is as follows. Important transcription factor regulating the expression of genes involved in immune and inflammatory responses. Also plays a significant role in adipogenesis, as well as in the gluconeogenic pathway, liver regeneration, and hematopoiesis. The consensus recognition site is 5'-T[TG]NNGNAA[TG]-3'. Its functional capacity is governed by protein interactions and post-translational protein modifications. During early embryogenesis, plays essential and redundant roles with CEBPA. Has a promitotic effect on many cell types such as hepatocytes and adipocytes but has an antiproliferative effect on T-cells by repressing MYC expression, facilitating differentiation along the T-helper 2 lineage. Binds to regulatory regions of several acute-phase and cytokines genes and plays a role in the regulation of acute-phase reaction and inflammation. Also plays a role in intracellular bacteria killing. During adipogenesis, is rapidly expressed and, after activation by phosphorylation, induces CEBPA and PPARG, which turn on the series of adipocyte genes that give rise to the adipocyte phenotype. The delayed transactivation of the CEBPA and PPARG genes by CEBPB appears necessary to allow mitotic clonal expansion and thereby progression of terminal differentiation. Essential for female reproduction because of a critical role in ovarian follicle development. Restricts osteoclastogenesis: together with NFE2L1; represses expression of DSPP during odontoblast differentiation. Functionally, essential for gene expression induction in activated macrophages. Plays a major role in immune responses such as CD4(+) T-cell response, granuloma formation and endotoxin shock. Not essential for intracellular bacteria killing. In terms of biological role, acts as a dominant negative through heterodimerization with isoform 2. Promotes osteoblast differentiation and osteoclastogenesis. In Rattus norvegicus (Rat), this protein is CCAAT/enhancer-binding protein beta.